The sequence spans 206 residues: Protein Nef (206 aa).

A lipid anchor (N-myristoyl glycine; by host) is attached at glycine 2. Serine 6 is subject to Phosphoserine; by host. An acidic; interacts with host PACS1 and PACS2; stabilizes the interaction of NEF/MHC-I with host AP1M1; necessary for MHC-I internalization region spans residues 62–65; sequence EEEE. The tract at residues 69–78 is SH3-binding; interaction with Src family tyrosine kinases; it reads PVTPQVPLRP. The short motif at 72-75 is the PxxP; stabilizes the interaction of NEF/MHC-I with host AP1M1; necessary for MHC-I internalization element; sequence PQVP. Residues 108–124 form a mediates dimerization, Nef-PTE1 interaction region; the sequence is DILDLWIYHTQGYFPDW. The mediates dimerization, Nef-PTE1 interaction, Nef-induced CD4 and MHC-I down-regulation and enhancement of infectivity stretch occupies residues 108 to 124; it reads DILDLWIYHTQGYFPDW. The binding to ATP6V1H stretch occupies residues 148–180; it reads VEPDKVEEANKGENTSLLHPVSLHGMDDPEREV. The Dileucine internalization motif; necessary for CD4 internalization motif lies at 164–165; the sequence is LL. Residues 174 to 175 carry the Diacidic; necessary for CD4 internalization motif; that stretch reads DD.

Belongs to the lentivirus primate group Nef protein family. As to quaternary structure, monomer; cytosolic form. Homodimer; membrane bound form. Interacts with Nef associated p21-activated kinase (PAK2); this interaction activates PAK2. Associates with the Nef-MHC-I-AP1 complex; this complex is required for MHC-I internalization. Interacts (via C-terminus) with host PI3-kinase. Interacts with host PACS1; this interaction seems to be weak. Interacts with host PACS2. Interacts with host LCK and MAPK3; these interactions inhibit the kinase activity of the latter. Interacts with host ATP6V1H; this interaction may play a role in CD4 endocytosis. Associates with the CD4-Nef-AP2 complex; this complex is required for CD4 internalization. Interacts with host AP2 subunit alpha and AP2 subunit sigma2. Interacts with TCR-zeta chain; this interaction up-regulates the Fas ligand (FasL) surface expression. Interacts with host HCK, LYN, and SRC; these interactions activate the Src family kinases. Interacts with MAP3K5; this interaction inhibits the Fas and TNFR-mediated death signals. Interacts with beta-COP and PTE1. Interacts with human RACK1; this increases Nef phosphorylation by PKC. Interacts with TP53; this interaction decreases the half-life of TP53, protecting the infected cell against p53-mediated apoptosis. In terms of processing, the virion-associated Nef proteins are cleaved by the viral protease to release the soluble C-terminal core protein. Nef is probably cleaved concomitantly with viral structural proteins on maturation of virus particles. Myristoylated. Post-translationally, phosphorylated on serine residues, probably by host PKCdelta and theta.

It localises to the host cell membrane. Its subcellular location is the virion. It is found in the secreted. The protein localises to the host Golgi apparatus membrane. Its function is as follows. Factor of infectivity and pathogenicity, required for optimal virus replication. Alters numerous pathways of T-lymphocytes function and down-regulates immunity surface molecules in order to evade host defense and increase viral infectivity. Alters the functionality of other immunity cells, like dendritic cells, monocytes/macrophages and NK cells. Functionally, in infected CD4(+) T-lymphocytes, down-regulates the surface MHC-I, mature MHC-II, CD4, CD28, CCR5 and CXCR4 molecules. Mediates internalization and degradation of host CD4 through the interaction of with the cytoplasmic tail of CD4, the recruitment of AP-2 (clathrin adapter protein complex 2), internalization through clathrin coated pits, and subsequent transport to endosomes and lysosomes for degradation. Diverts host MHC-I molecules to the trans-Golgi network-associated endosomal compartments by an endocytic pathway to finally target them for degradation. MHC-I down-regulation may involve AP-1 (clathrin adapter protein complex 1) or possibly Src family kinase-ZAP70/Syk-PI3K cascade recruited by PACS2. In consequence infected cells are masked for immune recognition by cytotoxic T-lymphocytes. Decreasing the number of immune receptors also prevents reinfection by more HIV particles (superinfection). Down-regulates host SERINC3 and SERINC5 thereby excluding these proteins from the viral particles. Virion infectivity is drastically higher when SERINC3 or SERINC5 are excluded from the viral envelope, because these host antiviral proteins impair the membrane fusion event necessary for subsequent virion penetration. In terms of biological role, bypasses host T-cell signaling by inducing a transcriptional program nearly identical to that of anti-CD3 cell activation. Interaction with TCR-zeta chain up-regulates the Fas ligand (FasL). Increasing surface FasL molecules and decreasing surface MHC-I molecules on infected CD4(+) cells send attacking cytotoxic CD8+ T-lymphocytes into apoptosis. Plays a role in optimizing the host cell environment for viral replication without causing cell death by apoptosis. Protects the infected cells from apoptosis in order to keep them alive until the next virus generation is ready to strike. Inhibits the Fas and TNFR-mediated death signals by blocking MAP3K5/ASK1. Decreases the half-life of TP53, protecting the infected cell against p53-mediated apoptosis. Inhibits the apoptotic signals regulated by the Bcl-2 family proteins through the formation of a Nef/PI3-kinase/PAK2 complex that leads to activation of PAK2 and induces phosphorylation of host BAD. Its function is as follows. Extracellular Nef protein targets CD4(+) T-lymphocytes for apoptosis by interacting with CXCR4 surface receptors. The chain is Protein Nef from Homo sapiens (Human).